A 333-amino-acid chain; its full sequence is Acyl-CoA wax alcohol acyltransferase 2 (333 aa).

The next 3 helical transmembrane spans lie at 15-35 (VFALFQWALSALVIVTTVIIV), 38-58 (YLVVFTSYWPVTVLMLTWLAF), and 130-150 (TFPGITPYMLTLGAFFWVPFL).

It belongs to the diacylglycerol acyltransferase family. In terms of assembly, monomer. As to expression, expressed in Mueller cells of the retina (at protein level). Abundant in tissues rich in sebaceous glands such as the preputial gland and eyelid.

The protein resides in the endoplasmic reticulum membrane. It catalyses the reaction a long chain fatty alcohol + a fatty acyl-CoA = a wax ester + CoA. The catalysed reaction is all-trans-retinol + an acyl-CoA = an all-trans-retinyl ester + CoA. The enzyme catalyses an acyl-CoA + a 1,2-diacyl-sn-glycerol = a triacyl-sn-glycerol + CoA. It carries out the reaction 9-cis-retinol + a fatty acyl-CoA = 9-cis-retinyl ester + CoA. It catalyses the reaction 11-cis-retinol + a fatty acyl-CoA = 11-cis-retinyl ester + CoA. The catalysed reaction is 13-cis-retinol + a fatty acyl-CoA = 13-cis-retinyl ester + CoA. The enzyme catalyses a 1-acylglycerol + an acyl-CoA = a 1,2-diacylglycerol + CoA. It carries out the reaction 1-O-alkylglycerol + an acyl-CoA = 1-O-alkyl-3-acylglycerol + CoA. It catalyses the reaction a 2-acylglycerol + an acyl-CoA = a 1,2-diacyl-sn-glycerol + CoA. The catalysed reaction is 2-(9Z-octadecenoyl)-glycerol + hexadecanoyl-CoA = 1-hexadecanoyl-2-(9Z-octadecenoyl)-sn-glycerol + CoA. The enzyme catalyses 1,2-di-(9Z-octadecenoyl)-sn-glycerol + hexadecanoyl-CoA = 1,2-di-(9Z)-octadecenoyl-3-hexadecanoyl-sn-glycerol + CoA. It carries out the reaction hexadecan-1-ol + hexadecanoyl-CoA = hexadecanyl hexadecanoate + CoA. It catalyses the reaction hexadecane-1,2-diol + hexadecanoyl-CoA = 2-hydroxyhexadecyl hexadecanoate + CoA. The catalysed reaction is all-trans-retinol + hexadecanoyl-CoA = all-trans-retinyl hexadecanoate + CoA. The enzyme catalyses 1,2-di-(9Z-octadecenoyl)-sn-glycerol + (9Z)-octadecenoyl-CoA = 1,2,3-tri-(9Z-octadecenoyl)-glycerol + CoA. It carries out the reaction hexadecan-1-ol + (9Z)-octadecenoyl-CoA = hexadecanyl (9Z)-octadecenoate + CoA. It catalyses the reaction (9Z)-hexadecen-1-ol + (9Z)-octadecenoyl-CoA = 1-O-(9Z)-hexadecenyl (9Z)-octadecenoate + CoA. The catalysed reaction is octadecan-1-ol + (9Z)-octadecenoyl-CoA = 1-O-octadecyl (9Z)-octadecenoate + CoA. The enzyme catalyses (9Z)-octadecen-1-ol + (9Z)-octadecenoyl-CoA = 1-O-(9Z)-octadecenyl (9Z)-octadecenoate + CoA. It carries out the reaction hexadecan-1-ol + (9Z)-hexadecenoyl-CoA = 1-O-hexadecyl (9Z)-hexadecenoate + CoA. It catalyses the reaction hexadecan-1-ol + octadecanoyl-CoA = hexadecanyl octadecanoate + CoA. The catalysed reaction is 11-cis-retinol + hexadecanoyl-CoA = 11-cis-retinyl hexadecanoate + CoA. The enzyme catalyses 1-O-(9Z-octadecenyl)-glycerol + (9Z)-octadecenoyl-CoA = 1-O-(9Z-octadecyl)-3-(9Z-octadecenoyl)-glycerol + CoA. It carries out the reaction 1-(9Z-octadecenoyl)-glycerol + (9Z)-octadecenoyl-CoA = 1,2-di-(9Z-octadecenoyl)-glycerol + CoA. It catalyses the reaction 11-cis-retinol + tetradecanoyl-CoA = 11-cis-retinyl tetradecanoate + CoA. The catalysed reaction is 9-cis-retinol + tetradecanoyl-CoA = 9-cis-retinyl tetradecanoate + CoA. The enzyme catalyses 9-cis-retinol + hexadecanoyl-CoA = 9-cis-retinyl hexadecanoate + CoA. It carries out the reaction 13-cis-retinol + tetradecanoyl-CoA = 13-cis-retinyl tetradecanoate + CoA. It catalyses the reaction all-trans-retinol + tetradecanoyl-CoA = all-trans-retinyl tetradecanoate + CoA. The catalysed reaction is tetradecan-1-ol + tetradecanoyl-CoA = tetradecanyl tetradecanoate + CoA. Its activity is regulated as follows. 11-cis retinoids act as allosteric modulators of acyl-CoA retinol O-fatty-acyltransferase (ARAT) activity by suppressing esterification of 9-cis, 13-cis, or all-trans retinols concurrently increasing the enzyme specificity toward 11-cis isomer. Functionally, acyltransferase that catalyzes the formation of ester bonds between fatty alcohols and fatty acyl-CoAs to form wax monoesters. Shows a preference for medium chain acyl-CoAs from C12 to C16 in length and fatty alcohols shorter than C20, as the acyl donor and acceptor, respectively. Also possesses fatty acyl-CoA retinol acyltransferase (ARAT) activity that preferentially esterifies 11-cis-retinol, a chromophore precursor of bleached opsin pigments in cone cells. Shows higher catalytic efficiency toward 11-cis-retinol versus 9-cis-retinol, 13- cis-retinol and all-trans-retinol substrates. The polypeptide is Acyl-CoA wax alcohol acyltransferase 2 (Awat2) (Mus musculus (Mouse)).